The sequence spans 366 residues: Cobalt-precorrin-5B C(1)-methyltransferase (366 aa).

Belongs to the CbiD family.

It catalyses the reaction Co-precorrin-5B + S-adenosyl-L-methionine = Co-precorrin-6A + S-adenosyl-L-homocysteine. Its pathway is cofactor biosynthesis; adenosylcobalamin biosynthesis; cob(II)yrinate a,c-diamide from sirohydrochlorin (anaerobic route): step 6/10. Functionally, catalyzes the methylation of C-1 in cobalt-precorrin-5B to form cobalt-precorrin-6A. This chain is Cobalt-precorrin-5B C(1)-methyltransferase, found in Pseudomonas aeruginosa (strain UCBPP-PA14).